The sequence spans 244 residues: DNA repair protein RecO (244 aa).

Belongs to the RecO family.

Functionally, involved in DNA repair and RecF pathway recombination. The protein is DNA repair protein RecO of Caldicellulosiruptor bescii (strain ATCC BAA-1888 / DSM 6725 / KCTC 15123 / Z-1320) (Anaerocellum thermophilum).